A 457-amino-acid chain; its full sequence is MDFVLTRLILLFLAATIIYSSEDESRLINDLFKSYNKVVRPVKAFKDKVVVTVGLQLIQLINVNEVNQIVTTNVRLKQQWEDVHLKWDPEDYGGIKKVRIPSSDIWRPDIVLYNNADGDFAIVQETKVLLDYTGKIIWLPPAIFKSYCEMIVTYFPFDLQNCSMKLGTWTYDGTLVVINPENDRPDLSNFMESGEWYMKDYRCWKHWVYYDCCPETPYLDITYHFLLQRLPLYFIVNVVIPCLLFSFLTGLVFYLPTDSGEKITLSVSVLLSLVVFLLVIVELIPSTSSAVPLIGKYMLFTMVFVIASIVITVIVINTHHRSPSTHIMPQWLKKIFIETIPRVMFFSTMKRPAQDQHKKKIFTEDIDISDISGKLGPTAVKYQSPILKNPDVKSAIEGAKYVAETMKSDQESTKASEEWKFVAMVLDHLLLAVFMIVCIIGTLAIFAGRLIELHMQG.

The signal sequence occupies residues 1–20; the sequence is MDFVLTRLILLFLAATIIYS. Residues 21-230 lie on the Extracellular side of the membrane; it reads SEDESRLIND…ITYHFLLQRL (210 aa). 2 cysteine pairs are disulfide-bonded: Cys148–Cys162 and Cys212–Cys213. An N-linked (GlcNAc...) asparagine glycan is attached at Asn161. 3 helical membrane passes run 231 to 255, 263 to 281, and 297 to 316; these read PLYFIVNVVIPCLLFSFLTGLVFYL, ITLSVSVLLSLVVFLLVIV, and YMLFTMVFVIASIVITVIVI. Over 317-428 the chain is Cytoplasmic; the sequence is NTHHRSPSTH…WKFVAMVLDH (112 aa). Residues 429–447 form a helical membrane-spanning segment; that stretch reads LLLAVFMIVCIIGTLAIFA.

Belongs to the ligand-gated ion channel (TC 1.A.9) family. Acetylcholine receptor (TC 1.A.9.1) subfamily. Alpha-1/CHRNA1 sub-subfamily. As to quaternary structure, one of the alpha chains that assemble within the acetylcholine receptor, a pentamer of two alpha chains, a beta, a delta, and a gamma or epsilon chains. In terms of tissue distribution, oocytes.

The protein localises to the postsynaptic cell membrane. It localises to the cell membrane. It carries out the reaction K(+)(in) = K(+)(out). It catalyses the reaction Na(+)(in) = Na(+)(out). Functionally, upon acetylcholine binding, the AChR responds by an extensive change in conformation that affects all subunits and leads to opening of an ion-conducting channel across the plasma membrane. The polypeptide is Acetylcholine receptor subunit alpha-1-A (chrna1-a) (Xenopus laevis (African clawed frog)).